The sequence spans 631 residues: Chaperone protein DnaK (631 aa).

A Phosphothreonine; by autocatalysis modification is found at Thr198. The disordered stretch occupies residues 598 to 631 (YSAQQGGEQPGAAKKDDVVDAEFTEVDDDKKKSA).

This sequence belongs to the heat shock protein 70 family.

In terms of biological role, acts as a chaperone. This Azorhizobium caulinodans (strain ATCC 43989 / DSM 5975 / JCM 20966 / LMG 6465 / NBRC 14845 / NCIMB 13405 / ORS 571) protein is Chaperone protein DnaK.